A 527-amino-acid chain; its full sequence is BTB/POZ domain-containing protein At4g01160 (527 aa).

The BTB domain occupies 111 to 180 (NNNTSVLSVQ…MYSNSLSVTA (70 aa)). The 95-residue stretch at 233–327 (VKPLTNAARQ…HMTTDRLKKI (95 aa)) folds into the BACK domain.

The protein operates within protein modification; protein ubiquitination. In terms of biological role, may act as a substrate-specific adapter of an E3 ubiquitin-protein ligase complex (CUL3-RBX1-BTB) which mediates the ubiquitination and subsequent proteasomal degradation of target proteins. In Arabidopsis thaliana (Mouse-ear cress), this protein is BTB/POZ domain-containing protein At4g01160.